The following is a 230-amino-acid chain: Phosphoribosylaminoimidazole-succinocarboxamide synthase (230 aa).

Belongs to the SAICAR synthetase family.

The enzyme catalyses 5-amino-1-(5-phospho-D-ribosyl)imidazole-4-carboxylate + L-aspartate + ATP = (2S)-2-[5-amino-1-(5-phospho-beta-D-ribosyl)imidazole-4-carboxamido]succinate + ADP + phosphate + 2 H(+). The protein operates within purine metabolism; IMP biosynthesis via de novo pathway; 5-amino-1-(5-phospho-D-ribosyl)imidazole-4-carboxamide from 5-amino-1-(5-phospho-D-ribosyl)imidazole-4-carboxylate: step 1/2. This is Phosphoribosylaminoimidazole-succinocarboxamide synthase from Thermotoga sp. (strain RQ2).